Reading from the N-terminus, the 400-residue chain is Ubiquitin-like modifier-activating enzyme 5 (400 aa).

Residues glycine 76, aspartate 97, lysine 120, asparagine 143, and asparagine 177 each contribute to the ATP site. The Zn(2+) site is built by cysteine 219 and cysteine 222. Cysteine 243 (glycyl thioester intermediate) is an active-site residue. Zn(2+)-binding residues include cysteine 296 and cysteine 301.

The protein belongs to the ubiquitin-activating E1 family. UBA5 subfamily.

In terms of biological role, E1-like enzyme which activates UFM1. The protein is Ubiquitin-like modifier-activating enzyme 5 of Drosophila virilis (Fruit fly).